A 521-amino-acid chain; its full sequence is Probable cytochrome P450 12d1 distal, mitochondrial (521 aa).

The N-terminal 19 residues, 1–19 (MNTLSSARSVAIYVGPVRS), are a transit peptide targeting the mitochondrion. Cysteine 467 is a heme binding site.

This sequence belongs to the cytochrome P450 family. Heme serves as cofactor.

The protein localises to the mitochondrion membrane. The protein is Probable cytochrome P450 12d1 distal, mitochondrial of Drosophila melanogaster (Fruit fly).